The following is a 446-amino-acid chain: Glutamine synthetase (446 aa).

A GS beta-grasp domain is found at 18-103 (ENVRYLRLQF…LICDVYKTDG (86 aa)). Residues 110 to 446 (PRANLKRVLK…WERDQYMKQY (337 aa)) form the GS catalytic domain. Residues Glu134 and Glu136 each coordinate Mg(2+). Glu186 serves as a coordination point for ATP. Glu191 and Glu198 together coordinate Mg(2+). L-glutamate contacts are provided by residues 242 to 243 (NG) and Gly243. His247 contributes to the Mg(2+) binding site. Residue Ser251 participates in ATP binding. L-glutamate-binding residues include Arg300, Glu306, and Arg318. ATP contacts are provided by Arg318 and Arg323. Glu335 is a Mg(2+) binding site. Arg337 provides a ligand contact to L-glutamate.

This sequence belongs to the glutamine synthetase family. In terms of assembly, oligomer of 12 subunits arranged in the form of two hexagons. In its feedback-inhibited form, interacts with TnrA in order to block its DNA-binding activity. The cofactor is Mg(2+).

The protein localises to the cytoplasm. The enzyme catalyses L-glutamate + NH4(+) + ATP = L-glutamine + ADP + phosphate + H(+). Its activity is regulated as follows. Inhibited by glutamine. Functionally, glutamine synthetase (GS) is an unusual multitasking protein that functions as an enzyme, a transcription coregulator, and a chaperone in ammonium assimilation and in the regulation of genes involved in nitrogen metabolism. It catalyzes the ATP-dependent biosynthesis of glutamine from glutamate and ammonia. Feedback-inhibited GlnA also interacts with and regulates the activity of the transcriptional regulator TnrA. During nitrogen limitation, TnrA is in its DNA-binding active state and turns on the transcription of genes required for nitrogen assimilation. Under conditions of nitrogen excess, feedback-inhibited GlnA forms a stable complex with TnrA, which inhibits its DNA-binding activity. In contrast, feedback-inhibited GlnA acts as a chaperone to stabilize the DNA-binding activity of GlnR, which represses the transcription of nitrogen assimilation genes. In Staphylococcus aureus (strain MRSA252), this protein is Glutamine synthetase.